A 507-amino-acid polypeptide reads, in one-letter code: Cytochrome P450 monooxygenase helB2 (507 aa).

Residues 1–22 (MALPIILCLAVILWTSWRLLDA) form the signal peptide. Residue cysteine 436 coordinates heme.

This sequence belongs to the cytochrome P450 family. Heme serves as cofactor.

It functions in the pathway mycotoxin biosynthesis. Its function is as follows. Cytochrome P450 monooxygenase; part of the gene cluster that mediates the biosynthesis of helvolic acid, an antibacterial nortriterpenoid. Protostadienol synthase helA cyclizes (3S)-oxidosqualene to (17Z)-protosta-17(20),24-dien-3-beta-ol (protostadienol). The synthesis of protostadienol is followed by several steps of monooxygenation, dehydrogenation, and acyl transfer to yield the final helvolic acid. Following the cyclization to the tetracyclic protostadienol by helA, cytochrome P450 monooxygenases helB1-mediated and helB2-mediated oxidation at C-4 and C-16, acyltransferase helD2-dependent acetylation of 16-OH, oxidation of C-21 by cytochrome P450 monooxygenase helB4, and short chain dehydrogenase helC-dependent oxidative decarboxylation yield the fusidane skeleton. This intermediate is further modified in three additional steps mediated by the cytochrome P450 monooxygenase helB3, the acyltransferase helD1, and the 3-ketosteroid 1-dehydrogenase helE to give helvolic acid. Compared with the late stages in the biosynthesis of helvolic acid, enzymes involved in the early stage modifications act in a relatively strict order. The hydroxylation of C-16 by helB1 and subsequent acetylation by helD2 should occur before the helB3-mediated oxidation of C-21. C-4 demethylation in fusidane-type antibiotics proceeds in an unusual manner though it is also achieved by oxidative decarboxylation. The methyl group at C-4 beta position is oxidized by helB1 and subsequently removed by the short chain dehydrogenase helC. This chain is Cytochrome P450 monooxygenase helB2, found in Aspergillus fumigatus (strain ATCC MYA-4609 / CBS 101355 / FGSC A1100 / Af293) (Neosartorya fumigata).